The sequence spans 1254 residues: Zinc finger protein BRUTUS-like At1g18910 (1254 aa).

Positions M1–S30 are disordered. The helical transmembrane segment at I454–P474 threads the bilayer. The CHY-type zinc-finger motif lies at P1013–S1082. Positions 1020, 1022, 1033, 1034, 1040, 1043, 1044, 1050, 1062, 1065, 1075, 1080, 1089, 1092, 1103, 1104, 1107, 1110, 1122, 1123, 1126, 1129, 1137, and 1139 each coordinate Zn(2+). The CTCHY-type zinc-finger motif lies at M1084–N1147. The segment at C1148–S1190 adopts an RING-type; atypical zinc-finger fold.

In terms of assembly, binds zinc and iron ions.

The protein resides in the membrane. It localises to the nucleus. Its pathway is protein modification; protein ubiquitination. Functionally, probable E3 ubiquitin-protein ligase that may regulate the response to iron deficiency and thus contributes to iron homeostasis. The protein is Zinc finger protein BRUTUS-like At1g18910 of Arabidopsis thaliana (Mouse-ear cress).